The chain runs to 230 residues: Large ribosomal subunit protein uL4 (230 aa).

Positions 51–105 (RAAARQGTHSTKTRGDVSGGGRKPYRQKGTGRARQGSMRAPQFTGGGIVHGPKLR) are disordered.

It belongs to the universal ribosomal protein uL4 family. Part of the 50S ribosomal subunit.

In terms of biological role, one of the primary rRNA binding proteins, this protein initially binds near the 5'-end of the 23S rRNA. It is important during the early stages of 50S assembly. It makes multiple contacts with different domains of the 23S rRNA in the assembled 50S subunit and ribosome. Functionally, forms part of the polypeptide exit tunnel. This is Large ribosomal subunit protein uL4 from Mycobacterium leprae (strain Br4923).